The sequence spans 273 residues: Formamidopyrimidine-DNA glycosylase (273 aa).

The Schiff-base intermediate with DNA role is filled by proline 2. Glutamate 3 functions as the Proton donor in the catalytic mechanism. Lysine 58 (proton donor; for beta-elimination activity) is an active-site residue. DNA is bound by residues histidine 92, arginine 111, and lysine 153. The segment at 238 to 272 adopts an FPG-type zinc-finger fold; that stretch reads KVYGREGQSCLSCSSTIIKIKHSGRSTFYCKTCQY. Arginine 262 (proton donor; for delta-elimination activity) is an active-site residue.

The protein belongs to the FPG family. As to quaternary structure, monomer. Requires Zn(2+) as cofactor.

It catalyses the reaction Hydrolysis of DNA containing ring-opened 7-methylguanine residues, releasing 2,6-diamino-4-hydroxy-5-(N-methyl)formamidopyrimidine.. It carries out the reaction 2'-deoxyribonucleotide-(2'-deoxyribose 5'-phosphate)-2'-deoxyribonucleotide-DNA = a 3'-end 2'-deoxyribonucleotide-(2,3-dehydro-2,3-deoxyribose 5'-phosphate)-DNA + a 5'-end 5'-phospho-2'-deoxyribonucleoside-DNA + H(+). Its function is as follows. Involved in base excision repair of DNA damaged by oxidation or by mutagenic agents. Acts as a DNA glycosylase that recognizes and removes damaged bases. Has a preference for oxidized purines, such as 7,8-dihydro-8-oxoguanine (8-oxoG). Has AP (apurinic/apyrimidinic) lyase activity and introduces nicks in the DNA strand. Cleaves the DNA backbone by beta-delta elimination to generate a single-strand break at the site of the removed base with both 3'- and 5'-phosphates. This is Formamidopyrimidine-DNA glycosylase from Rickettsia conorii (strain ATCC VR-613 / Malish 7).